A 435-amino-acid polypeptide reads, in one-letter code: Probable E3 ubiquitin-protein ligase makorin-1 (435 aa).

2 C3H1-type zinc fingers span residues 18-45 (WTKH…HDLT) and 48-75 (KPAA…HCKP). The segment at 81–109 (LPAPQMLPLPSASLAGPSDPEPSGPTPVP) is disordered. Over residues 99–108 (DPEPSGPTPV) the composition is skewed to pro residues. The C3H1-type 3 zinc-finger motif lies at 155 to 182 (QLRKQLCPYAAVGECRYGINCAYLHGDV). Positions 183–210 (CYMCGLQVLHPTDNNQRSEHTKACIEAH) are makorin-type Cys-His. The RING-type zinc finger occupies 228 to 282 (CGVCMEVVFEKANPSERRFGILSNCSHCYCLKCIRKWRSAKQFESKIIKSCPECR). The C3H1-type 4 zinc finger occupies 311 to 340 (GMGSKPCRYFDEGRGTCPFGSNCFYKHAFP). The segment at 345–369 (EEAQPQRRQTGSNSRNRNSRRTPLW) is disordered.

In terms of tissue distribution, weakly expressed in adult brain, heart and kidney.

It carries out the reaction S-ubiquitinyl-[E2 ubiquitin-conjugating enzyme]-L-cysteine + [acceptor protein]-L-lysine = [E2 ubiquitin-conjugating enzyme]-L-cysteine + N(6)-ubiquitinyl-[acceptor protein]-L-lysine.. It functions in the pathway protein modification; protein ubiquitination. Functionally, E3 ubiquitin ligase catalyzing the covalent attachment of ubiquitin moieties onto substrate proteins. This is Probable E3 ubiquitin-protein ligase makorin-1 from Seriola quinqueradiata (Five-ray yellowtail).